The sequence spans 413 residues: Imidazolonepropionase (413 aa).

Fe(3+) contacts are provided by H70 and H72. H70 and H72 together coordinate Zn(2+). R79, Y142, and H175 together coordinate 4-imidazolone-5-propanoate. An N-formimidoyl-L-glutamate-binding site is contributed by Y142. H240 lines the Fe(3+) pocket. Residue H240 coordinates Zn(2+). Position 243 (E243) interacts with 4-imidazolone-5-propanoate. Residue D315 coordinates Fe(3+). D315 contributes to the Zn(2+) binding site. Positions 317 and 319 each coordinate N-formimidoyl-L-glutamate. S320 serves as a coordination point for 4-imidazolone-5-propanoate.

The protein belongs to the metallo-dependent hydrolases superfamily. HutI family. Zn(2+) serves as cofactor. The cofactor is Fe(3+).

It localises to the cytoplasm. The enzyme catalyses 4-imidazolone-5-propanoate + H2O = N-formimidoyl-L-glutamate. It functions in the pathway amino-acid degradation; L-histidine degradation into L-glutamate; N-formimidoyl-L-glutamate from L-histidine: step 3/3. Catalyzes the hydrolytic cleavage of the carbon-nitrogen bond in imidazolone-5-propanoate to yield N-formimidoyl-L-glutamate. It is the third step in the universal histidine degradation pathway. In Treponema denticola (strain ATCC 35405 / DSM 14222 / CIP 103919 / JCM 8153 / KCTC 15104), this protein is Imidazolonepropionase.